Here is a 451-residue protein sequence, read N- to C-terminus: MSALVLESRALGRKLSDFGQETSYIEGNSDQNAVSLIFSLKEEVGALARVLRLFEENDINLTHIESRPSRLRKDEYEFFTNLDQRSVPALANIIKILRHDIGATVHELSRDKKKDTVPWFPRTIQELDNFANQVLSYGAELDADHPGFKDPVYRARRKQFADIAYNYRHGQPIPRVEYTEEEKKTWGTVFRTLKSLYKTHACYEHNHIFPLLEKYCGFREDNIPQLEEVSQFLQSCTGFRLRPVAGLLSSRDFLGGLAFRVFHCTQYIRHGSKPMYTPEPDICHELLGHVPLFSDRSFAQFSQEIGLASLGAPDEYIEKLATIYWFTVEFGLCKQGDSIKAYGAGLLSSFGELQYCLSDKPKLLPLELEKTAVQEYTITEFQPLYYVAESFNDAKEKVRNFAATIPRPFSVHYDPYTQRIEVLDNTQQLKILADSISSEVEILCSALQKLK.

Ser16 bears the Phosphoserine; by PKA mark. The 79-residue stretch at 35–113 (SLIFSLKEEV…TVHELSRDKK (79 aa)) folds into the ACT domain. Fe cation contacts are provided by His284, His289, and Glu329.

The protein belongs to the biopterin-dependent aromatic amino acid hydroxylase family. In terms of assembly, homodimer and homotetramer. Fe(2+) is required as a cofactor. In terms of processing, phosphorylation at Ser-16 increases basal activity and facilitates activation by the substrate phenylalanine.

The enzyme catalyses (6R)-L-erythro-5,6,7,8-tetrahydrobiopterin + L-phenylalanine + O2 = (4aS,6R)-4a-hydroxy-L-erythro-5,6,7,8-tetrahydrobiopterin + L-tyrosine. It functions in the pathway amino-acid degradation; L-phenylalanine degradation; acetoacetate and fumarate from L-phenylalanine: step 1/6. N-terminal region of PAH is thought to contain allosteric binding sites for phenylalanine and to constitute an 'inhibitory' domain that regulates the activity of a catalytic domain in the C-terminal portion of the molecule. In terms of biological role, catalyzes the hydroxylation of L-phenylalanine to L-tyrosine. The sequence is that of Phenylalanine-4-hydroxylase (PAH) from Bos taurus (Bovine).